We begin with the raw amino-acid sequence, 118 residues long: MICOS complex subunit MIC13 (118 aa).

The Mitochondrial matrix portion of the chain corresponds to 1–7 (MVPRVWS). A helical membrane pass occupies residues 8-26 (LMRFLIKGSVAGGAIYLVY). Residues 27–118 (DQDPLGPSDK…GWEYLKERTK (92 aa)) are Mitochondrial intermembrane-facing.

This sequence belongs to the MICOS complex subunit Mic13 family. Component of the mitochondrial contact site and cristae organizing system (MICOS) complex, composed of at least MICOS10/MIC10, CHCHD3/MIC19, CHCHD6/MIC25, APOO/MIC26, MICOS13/MIC13, APOOL/MIC27 and IMMT/MIC60. The MICOS complex associates with mitochondrial outer membrane proteins SAMM50, MTX1 and MTX2 (together described as components of the mitochondrial outer membrane sorting assembly machinery (SAM) complex) and DNAJC11, mitochondrial inner membrane protein TMEM11 and with HSPA9. The MICOS and SAM complexes together with DNAJC11 are part of a large protein complex spanning both membranes termed the mitochondrial intermembrane space bridging (MIB) complex.

Its subcellular location is the mitochondrion inner membrane. Its function is as follows. Component of the MICOS complex, a large protein complex of the mitochondrial inner membrane that plays crucial roles in the maintenance of crista junctions, inner membrane architecture, and formation of contact sites to the outer membrane. Constituent of mature MICOS complex, it is required for the formation of cristae junction (CJ) and maintenance of cristae morphology. Required for the incorporation of MICOS10/MIC10 into the MICOS complex. The chain is MICOS complex subunit MIC13 from Sus scrofa (Pig).